The chain runs to 213 residues: Kynurenine formamidase (213 aa).

Residue W20 participates in substrate binding. H50, H54, and D56 together coordinate Zn(2+). H60 functions as the Proton donor/acceptor in the catalytic mechanism. Residues H161 and E173 each coordinate Zn(2+).

This sequence belongs to the Cyclase 1 superfamily. KynB family. Homodimer. Requires Zn(2+) as cofactor.

The catalysed reaction is N-formyl-L-kynurenine + H2O = L-kynurenine + formate + H(+). The protein operates within amino-acid degradation; L-tryptophan degradation via kynurenine pathway; L-kynurenine from L-tryptophan: step 2/2. Catalyzes the hydrolysis of N-formyl-L-kynurenine to L-kynurenine, the second step in the kynurenine pathway of tryptophan degradation. The protein is Kynurenine formamidase of Pseudomonas aeruginosa (strain UCBPP-PA14).